A 361-amino-acid polypeptide reads, in one-letter code: Queuine tRNA-ribosyltransferase (361 aa).

Residue aspartate 92 is the Proton acceptor of the active site. Substrate is bound by residues aspartate 92–phenylalanine 96, aspartate 146, glutamine 189, and glycine 216. The tract at residues glycine 247–aspartate 253 is RNA binding. Aspartate 266 acts as the Nucleophile in catalysis. An RNA binding; important for wobble base 34 recognition region spans residues threonine 271–arginine 275. 4 residues coordinate Zn(2+): cysteine 304, cysteine 306, cysteine 309, and histidine 335.

This sequence belongs to the queuine tRNA-ribosyltransferase family. In terms of assembly, homodimer. Within each dimer, one monomer is responsible for RNA recognition and catalysis, while the other monomer binds to the replacement base PreQ1. Zn(2+) is required as a cofactor.

It catalyses the reaction 7-aminomethyl-7-carbaguanine + guanosine(34) in tRNA = 7-aminomethyl-7-carbaguanosine(34) in tRNA + guanine. Its pathway is tRNA modification; tRNA-queuosine biosynthesis. Functionally, catalyzes the base-exchange of a guanine (G) residue with the queuine precursor 7-aminomethyl-7-deazaguanine (PreQ1) at position 34 (anticodon wobble position) in tRNAs with GU(N) anticodons (tRNA-Asp, -Asn, -His and -Tyr). Catalysis occurs through a double-displacement mechanism. The nucleophile active site attacks the C1' of nucleotide 34 to detach the guanine base from the RNA, forming a covalent enzyme-RNA intermediate. The proton acceptor active site deprotonates the incoming PreQ1, allowing a nucleophilic attack on the C1' of the ribose to form the product. After dissociation, two additional enzymatic reactions on the tRNA convert PreQ1 to queuine (Q), resulting in the hypermodified nucleoside queuosine (7-(((4,5-cis-dihydroxy-2-cyclopenten-1-yl)amino)methyl)-7-deazaguanosine). The protein is Queuine tRNA-ribosyltransferase of Rickettsia typhi (strain ATCC VR-144 / Wilmington).